A 560-amino-acid polypeptide reads, in one-letter code: N-acetylglucosamine-6-sulfatase (560 aa).

The interval 1 to 25 (MRLLSLAPDRPRRGGPRHLTSGSPA) is disordered. The signal sequence occupies residues 1 to 48 (MRLLSLAPDRPRRGGPRHLTSGSPALPPPPPLLLLLLLLGGCLGVSGA). Residues aspartate 63, aspartate 64, and cysteine 99 each contribute to the Ca(2+) site. Residue cysteine 99 is the Nucleophile of the active site. A 3-oxoalanine (Cys) modification is found at cysteine 99. 7 N-linked (GlcNAc...) asparagine glycosylation sites follow: asparagine 119, asparagine 125, asparagine 191, asparagine 206, asparagine 218, asparagine 287, and asparagine 325. Positions 334 and 335 each coordinate Ca(2+). N-linked (GlcNAc...) asparagine glycans are attached at residues asparagine 370, asparagine 395, asparagine 413, asparagine 430, asparagine 457, and asparagine 488. Serine 549 bears the Phosphoserine mark.

Belongs to the sulfatase family. Requires Ca(2+) as cofactor. Post-translationally, the conversion to 3-oxoalanine (also known as C-formylglycine, FGly), of a serine or cysteine residue in prokaryotes and of a cysteine residue in eukaryotes, is critical for catalytic activity.

Its subcellular location is the lysosome. It catalyses the reaction Hydrolysis of the 6-sulfate groups of the N-acetyl-D-glucosamine 6-sulfate units of heparan sulfate and keratan sulfate.. In terms of biological role, hydrolyzes 6-sulfate groups in N-acetyl-d-glucosaminide units of heparin sulfate and keratan sulfate. This Bos taurus (Bovine) protein is N-acetylglucosamine-6-sulfatase (GNS).